Reading from the N-terminus, the 536-residue chain is Carboxypeptidase Y homolog A (536 aa).

The N-terminal stretch at 1 to 17 (MKFFTTGLLATAALAAA) is a signal peptide. The propeptide occupies 18-124 (QEQQVLQAED…KLHNYDLRVK (107 aa)). 5 cysteine pairs are disulfide-bonded: Cys172–Cys412, Cys306–Cys320, Cys330–Cys353, Cys337–Cys346, and Cys375–Cys382. The N-linked (GlcNAc...) asparagine glycan is linked to Asn203. Ser259 is an active-site residue. Asp451 is an active-site residue. The N-linked (GlcNAc...) asparagine glycan is linked to Asn502. The active site involves His513.

Belongs to the peptidase S10 family.

Its subcellular location is the vacuole. It catalyses the reaction Release of a C-terminal amino acid with broad specificity.. Vacuolar carboxypeptidase involved in degradation of small peptides. Digests preferentially peptides containing an aliphatic or hydrophobic residue in P1' position, as well as methionine, leucine or phenylalanine in P1 position of ester substrate. The polypeptide is Carboxypeptidase Y homolog A (cpyA) (Trichophyton rubrum (Athlete's foot fungus)).